The following is a 198-amino-acid chain: Elongation factor Ts (198 aa).

An involved in Mg(2+) ion dislocation from EF-Tu region spans residues 81-84 (TDFV).

This sequence belongs to the EF-Ts family.

The protein localises to the cytoplasm. Its function is as follows. Associates with the EF-Tu.GDP complex and induces the exchange of GDP to GTP. It remains bound to the aminoacyl-tRNA.EF-Tu.GTP complex up to the GTP hydrolysis stage on the ribosome. This is Elongation factor Ts from Pseudothermotoga lettingae (strain ATCC BAA-301 / DSM 14385 / NBRC 107922 / TMO) (Thermotoga lettingae).